A 418-amino-acid chain; its full sequence is Gamma-glutamyl phosphate reductase (418 aa).

It belongs to the gamma-glutamyl phosphate reductase family.

The protein localises to the cytoplasm. The enzyme catalyses L-glutamate 5-semialdehyde + phosphate + NADP(+) = L-glutamyl 5-phosphate + NADPH + H(+). The protein operates within amino-acid biosynthesis; L-proline biosynthesis; L-glutamate 5-semialdehyde from L-glutamate: step 2/2. Functionally, catalyzes the NADPH-dependent reduction of L-glutamate 5-phosphate into L-glutamate 5-semialdehyde and phosphate. The product spontaneously undergoes cyclization to form 1-pyrroline-5-carboxylate. This is Gamma-glutamyl phosphate reductase from Nitrosococcus oceani (strain ATCC 19707 / BCRC 17464 / JCM 30415 / NCIMB 11848 / C-107).